The sequence spans 121 residues: Large ribosomal subunit protein bL12 (121 aa).

Belongs to the bacterial ribosomal protein bL12 family. As to quaternary structure, homodimer. Part of the ribosomal stalk of the 50S ribosomal subunit. Forms a multimeric L10(L12)X complex, where L10 forms an elongated spine to which 2 to 4 L12 dimers bind in a sequential fashion. Binds GTP-bound translation factors.

Its function is as follows. Forms part of the ribosomal stalk which helps the ribosome interact with GTP-bound translation factors. Is thus essential for accurate translation. The polypeptide is Large ribosomal subunit protein bL12 (Enterobacter sp. (strain 638)).